The sequence spans 697 residues: Potassium-transporting ATPase ATP-binding subunit (697 aa).

4 consecutive transmembrane segments (helical) span residues 55–75 (PIMF…FLPS), 79–99 (SIPG…VLFA), 245–265 (LTLI…YLGF), and 271–291 (VLVA…LSAI). The active-site 4-aspartylphosphate intermediate is the Asp324. ATP is bound by residues Asp361, Glu365, 393 to 400 (FKAETRMS), and Lys412. Positions 535 and 539 each coordinate Mg(2+). The next 3 helical transmembrane spans lie at 605–625 (FAII…LNIM), 633–653 (AILS…PLAM), and 677–697 (GGVI…GLFI).

The protein belongs to the cation transport ATPase (P-type) (TC 3.A.3) family. Type IA subfamily. The system is composed of three essential subunits: KdpA, KdpB and KdpC.

The protein resides in the cell membrane. It catalyses the reaction K(+)(out) + ATP + H2O = K(+)(in) + ADP + phosphate + H(+). Part of the high-affinity ATP-driven potassium transport (or Kdp) system, which catalyzes the hydrolysis of ATP coupled with the electrogenic transport of potassium into the cytoplasm. This subunit is responsible for energy coupling to the transport system and for the release of the potassium ions to the cytoplasm. The polypeptide is Potassium-transporting ATPase ATP-binding subunit (Bacillus anthracis (strain CDC 684 / NRRL 3495)).